A 132-amino-acid polypeptide reads, in one-letter code: Small ribosomal subunit protein uS8 (132 aa).

The protein belongs to the universal ribosomal protein uS8 family. As to quaternary structure, part of the 30S ribosomal subunit. Contacts proteins S5 and S12.

Functionally, one of the primary rRNA binding proteins, it binds directly to 16S rRNA central domain where it helps coordinate assembly of the platform of the 30S subunit. In Rhizobium meliloti (strain 1021) (Ensifer meliloti), this protein is Small ribosomal subunit protein uS8.